A 1048-amino-acid polypeptide reads, in one-letter code: Integrin alpha-V (1048 aa).

The first 30 residues, 1 to 30 (MAFPPRRRLRLGPRGLPLLLSGLLLPLCRA), serve as a signal peptide directing secretion. Residues 31-992 (FNLDVESPAE…WGIQPAPMPV (962 aa)) lie on the Extracellular side of the membrane. FG-GAP repeat units follow at residues 32–98 (NLDV…RRCQ), 109–170 (DYAK…VEYA), 173–225 (RSKN…VSKY), 237–291 (QLAT…GKNM), 292–357 (SSLH…GDFQ), 358–415 (TIKL…GLNA), and 419–482 (QILE…VYPS). N-linked (GlcNAc...) asparagine glycosylation occurs at Asn74. 3 disulfides stabilise this stretch: Cys89/Cys97, Cys138/Cys158, and Cys172/Cys185. Residues Asp260, Asn262, Asp264, Ile266, and Asp268 each coordinate Ca(2+). Asn290 and Asn296 each carry an N-linked (GlcNAc...) asparagine glycan. The Ca(2+) site is built by Asp314, Asn316, Asp318, Tyr320, Asp322, Asp379, Asp381, Asp383, Phe385, Asp387, Asp443, Asp445, Asn447, Tyr449, and Asp451. Residue Asn488 is glycosylated (N-linked (GlcNAc...) asparagine). Disulfide bonds link Cys491-Cys502 and Cys508-Cys565. N-linked (GlcNAc...) asparagine glycosylation is found at Asn554 and Asn615. Disulfide bonds link Cys626–Cys632 and Cys698–Cys711. N-linked (GlcNAc...) asparagine glycans are attached at residues Asn704, Asn835, Asn851, and Asn874. 2 disulfide bridges follow: Cys852–Cys914 and Cys904–Cys909. Residues Asn945, Asn973, and Asn980 are each glycosylated (N-linked (GlcNAc...) asparagine). The chain crosses the membrane as a helical span at residues 993-1016 (PVWVIILAVLAGLLLLAVLVFVMY). The Cytoplasmic portion of the chain corresponds to 1017 to 1048 (RMGFFKRVRPPQEEQEREQLQPHENGEGNSET). The GFFKR motif motif lies at 1019-1023 (GFFKR). Positions 1027–1042 (PQEEQEREQLQPHENG) are enriched in basic and acidic residues. Positions 1027–1048 (PQEEQEREQLQPHENGEGNSET) are disordered.

It belongs to the integrin alpha chain family. As to quaternary structure, heterodimer of an alpha and a beta subunit. The alpha subunit is composed of a heavy and a light chain linked by a disulfide bond. Alpha-V (ITGAV) associates with either beta-1 (ITGB1), beta-3 (ITGB3), beta-5 (ITGB5), beta-6 (ITGB6) or beta-8 (ITGB8). Interacts with RAB25. Interacts with CIB1. Integrins ITGAV:ITGB3 and ITGAV:ITGB5 interact with FBLN5 (via N-terminus). ITGAV:ITGB3 and ITGAV:ITGB5 interact with CCN3. ITGAV:ITGB3 interacts with ADGRA2. ITGAV:ITGB3 interacts with FGF2; it is likely that FGF2 can simultaneously bind ITGAV:ITGB3 and FGF receptors. ITGAV:ITGB3 interacts with SELP (via C-type lectin domain); the interaction mediates cell-cell interaction and adhesion. ITGAV:ITGB3 is found in a ternary complex with CX3CR1 and CX3CL1. ITGAV:ITGB3 is found in a ternary complex with NRG1 and ERBB3. ITGAV:ITGB3 is found in a ternary complex with FGF1 and FGFR1. ITGAV:ITGB3 is found in a ternary complex with IGF1 and IGF1R. ITGAV:ITGB3 interacts with IGF2. ITGAV:ITGB3 and ITGAV:ITGB6 interact with FBN1. ITGAV:ITGB3 interacts with CD9, CD81 and CD151 (via second extracellular domain). ITGAV:ITGB6 interacts with TGFB1. ITGAV:ITGB3 interacts with PTN. Forms a complex with PTPRZ1 and PTN that stimulates endothelial cell migration through ITGB3 'Tyr-773' phosphorylation. Interacts with TM4SF19. In terms of assembly, (Microbial infection) Alpha-V/beta-6 and alpha-V/beta-3 bind to foot-and-mouth disease virus (FMDV) VP1 protein and acts as a receptor for this virus.

The protein resides in the cell membrane. It localises to the cell junction. The protein localises to the focal adhesion. The alpha-V (ITGAV) integrins are receptors for vitronectin, cytotactin, fibronectin, fibrinogen, laminin, matrix metalloproteinase-2, osteopontin, osteomodulin, prothrombin, thrombospondin, TGFB1 and vWF. They recognize the sequence R-G-D in a wide array of ligands. Alpha-V integrins may play a role in embryo implantation, angiogenesis and wound healing. ITGAV:ITGB3 binds to fractalkine (CX3CL1) and may act as its coreceptor in CX3CR1-dependent fractalkine signaling. ITGAV:ITGB3 binds to NRG1 (via EGF domain) and this binding is essential for NRG1-ERBB signaling. ITGAV:ITGB3 binds to FGF1 and this binding is essential for FGF1 signaling. ITGAV:ITGB3 binds to FGF2 and this binding is essential for FGF2 signaling. ITGAV:ITGB3 binds to IGF1 and this binding is essential for IGF1 signaling. ITGAV:ITGB3 binds to IGF2 and this binding is essential for IGF2 signaling. ITGAV:ITGB3 binds to IL1B and this binding is essential for IL1B signaling. ITGAV:ITGB3 binds to PLA2G2A via a site (site 2) which is distinct from the classical ligand-binding site (site 1) and this induces integrin conformational changes and enhanced ligand binding to site 1. ITGAV:ITGB3 and ITGAV:ITGB6 act as receptors for fibrillin-1 (FBN1) and mediate R-G-D-dependent cell adhesion to FBN1. Integrin alpha-V/beta-6 or alpha-V/beta-8 (ITGAV:ITGB6 or ITGAV:ITGB8) mediates R-G-D-dependent release of transforming growth factor beta-1 (TGF-beta-1) from regulatory Latency-associated peptide (LAP), thereby playing a key role in TGF-beta-1 activation. ITGAV:ITGB3 acts as a receptor for CD40LG. ITGAV:ITGB3 acts as a receptor for IBSP and promotes cell adhesion and migration to IBSP. In Bos taurus (Bovine), this protein is Integrin alpha-V (ITGAV).